Here is a 350-residue protein sequence, read N- to C-terminus: Protein-glutamate methylesterase/protein-glutamine glutaminase (350 aa).

Positions 5-122 constitute a Response regulatory domain; that stretch reads TVLCVDDSAL…REGMLAYSEL (118 aa). Position 56 is a 4-aspartylphosphate (Asp56). In terms of domain architecture, CheB-type methylesterase spans 153–345; that stretch reads LLSSEKLIAV…KRMLAKISSG (193 aa). Residues Ser165, His191, and Asp287 contribute to the active site.

Belongs to the CheB family. Post-translationally, phosphorylated by CheA. Phosphorylation of the N-terminal regulatory domain activates the methylesterase activity.

Its subcellular location is the cytoplasm. It catalyses the reaction [protein]-L-glutamate 5-O-methyl ester + H2O = L-glutamyl-[protein] + methanol + H(+). The enzyme catalyses L-glutaminyl-[protein] + H2O = L-glutamyl-[protein] + NH4(+). In terms of biological role, involved in chemotaxis. Part of a chemotaxis signal transduction system that modulates chemotaxis in response to various stimuli. Catalyzes the demethylation of specific methylglutamate residues introduced into the chemoreceptors (methyl-accepting chemotaxis proteins or MCP) by CheR. Also mediates the irreversible deamidation of specific glutamine residues to glutamic acid. In Photorhabdus laumondii subsp. laumondii (strain DSM 15139 / CIP 105565 / TT01) (Photorhabdus luminescens subsp. laumondii), this protein is Protein-glutamate methylesterase/protein-glutamine glutaminase.